The sequence spans 481 residues: Glutamyl-tRNA(Gln) amidotransferase subunit A (481 aa).

Catalysis depends on charge relay system residues Lys76 and Ser151. Ser175 serves as the catalytic Acyl-ester intermediate.

The protein belongs to the amidase family. GatA subfamily. Heterotrimer of A, B and C subunits.

The catalysed reaction is L-glutamyl-tRNA(Gln) + L-glutamine + ATP + H2O = L-glutaminyl-tRNA(Gln) + L-glutamate + ADP + phosphate + H(+). Its function is as follows. Allows the formation of correctly charged Gln-tRNA(Gln) through the transamidation of misacylated Glu-tRNA(Gln) in organisms which lack glutaminyl-tRNA synthetase. The reaction takes place in the presence of glutamine and ATP through an activated gamma-phospho-Glu-tRNA(Gln). This chain is Glutamyl-tRNA(Gln) amidotransferase subunit A, found in Neisseria gonorrhoeae (strain NCCP11945).